Reading from the N-terminus, the 131-residue chain is ATP synthase lipid-binding protein, mitochondrial (131 aa).

Residues 1–56 (MLSAARLIAPAARSAIFSNAAVVRPLAAVSTQTQLVPAAPAQLSAVRSFQTTSVTK) constitute a mitochondrion transit peptide. Residues 72–92 (VGVAGSGAGIGTVFGSLIIGY) form a helical membrane-spanning segment. Lys-99 carries the post-translational modification N6,N6,N6-trimethyllysine. The chain crosses the membrane as a helical span at residues 107–127 (ILGFALSEAMGLFCLMMAFLL).

This sequence belongs to the ATPase C chain family. F-type ATPases have 2 components, CF(1) - the catalytic core - and CF(0) - the membrane proton channel. CF(1) has five subunits: alpha(3), beta(3), gamma(1), delta(1), epsilon(1). CF(0) has three main subunits: a, b and c. In terms of processing, trimethylated by ATPSCKMT at Lys-99. Methylation may be required for proper incorporation of the C subunit into the ATP synthase complex and mitochondrial respiration.

The protein localises to the mitochondrion membrane. In terms of biological role, mitochondrial membrane ATP synthase (F(1)F(0) ATP synthase or Complex V) produces ATP from ADP in the presence of a proton gradient across the membrane which is generated by electron transport complexes of the respiratory chain. F-type ATPases consist of two structural domains, F(1) - containing the extramembraneous catalytic core and F(0) - containing the membrane proton channel, linked together by a central stalk and a peripheral stalk. During catalysis, ATP synthesis in the catalytic domain of F(1) is coupled via a rotary mechanism of the central stalk subunits to proton translocation. Part of the complex F(0) domain. A homomeric c-ring of probably 10 subunits is part of the complex rotary element. The sequence is that of ATP synthase lipid-binding protein, mitochondrial from Manduca sexta (Tobacco hawkmoth).